Here is a 103-residue protein sequence, read N- to C-terminus: V-type sodium ATPase subunit G (103 aa).

This sequence belongs to the V-ATPase F subunit family.

Involved in ATP-driven sodium extrusion. This is V-type sodium ATPase subunit G (ntpG) from Enterococcus hirae (strain ATCC 9790 / DSM 20160 / JCM 8729 / LMG 6399 / NBRC 3181 / NCIMB 6459 / NCDO 1258 / NCTC 12367 / WDCM 00089 / R).